The chain runs to 273 residues: 2,3,4,5-tetrahydropyridine-2,6-dicarboxylate N-succinyltransferase (273 aa).

2 residues coordinate substrate: arginine 104 and aspartate 141.

Belongs to the transferase hexapeptide repeat family. As to quaternary structure, homotrimer.

The protein localises to the cytoplasm. It catalyses the reaction (S)-2,3,4,5-tetrahydrodipicolinate + succinyl-CoA + H2O = (S)-2-succinylamino-6-oxoheptanedioate + CoA. It participates in amino-acid biosynthesis; L-lysine biosynthesis via DAP pathway; LL-2,6-diaminopimelate from (S)-tetrahydrodipicolinate (succinylase route): step 1/3. The protein is 2,3,4,5-tetrahydropyridine-2,6-dicarboxylate N-succinyltransferase of Psychrobacter sp. (strain PRwf-1).